The sequence spans 1417 residues: DNA-directed RNA polymerase subunit beta' (1417 aa).

Zn(2+) contacts are provided by Cys-71, Cys-73, Cys-86, and Cys-89. Residues Asp-461, Asp-463, and Asp-465 each coordinate Mg(2+). Residues Cys-815, Cys-889, Cys-896, and Cys-899 each contribute to the Zn(2+) site.

Belongs to the RNA polymerase beta' chain family. The RNAP catalytic core consists of 2 alpha, 1 beta, 1 beta' and 1 omega subunit. When a sigma factor is associated with the core the holoenzyme is formed, which can initiate transcription. Mg(2+) serves as cofactor. Requires Zn(2+) as cofactor.

It catalyses the reaction RNA(n) + a ribonucleoside 5'-triphosphate = RNA(n+1) + diphosphate. DNA-dependent RNA polymerase catalyzes the transcription of DNA into RNA using the four ribonucleoside triphosphates as substrates. This chain is DNA-directed RNA polymerase subunit beta', found in Pasteurella multocida (strain Pm70).